A 489-amino-acid chain; its full sequence is NAC domain-containing protein 74 (489 aa).

In terms of domain architecture, NAC spans 9–159 (LPPGFGFHPK…AYVLCRITKR (151 aa)). The DNA-binding element occupies 108-165 (IGTKKTLVFHEGRPPTGRRTEWIMHEYYIDERECQACPDMKDAYVLCRITKRNDWIPG). The segment covering 413–427 (KNQAHDVASTKRSDA) has biased composition (basic and acidic residues). The segment at 413-435 (KNQAHDVASTKRSDAGKPSTELS) is disordered. A helical membrane pass occupies residues 456–476 (WNMILVAGFAIGVAVVALHIG).

Widely expressed.

It is found in the nucleus. The protein localises to the cell membrane. Its function is as follows. Transcription activator involved in heat and endoplasmic reticulum (ER) stress responses. Regulates the expression of genes involved in ER protein folding and heat stress-responsive genes. Binds directly to the promoter of BZIP74 and regulates its expression in response to heat stress. The protein is NAC domain-containing protein 74 of Oryza sativa subsp. japonica (Rice).